Here is a 650-residue protein sequence, read N- to C-terminus: Chaperone protein DnaK (650 aa).

A Phosphothreonine; by autocatalysis modification is found at T200. A compositionally biased stretch (low complexity) spans 613–634; that stretch reads QAGAAGAAGAAAAEGAAQGGAQ. Positions 613–637 are disordered; it reads QAGAAGAAGAAAAEGAAQGGAQTAD.

This sequence belongs to the heat shock protein 70 family.

Functionally, acts as a chaperone. The sequence is that of Chaperone protein DnaK from Burkholderia thailandensis (strain ATCC 700388 / DSM 13276 / CCUG 48851 / CIP 106301 / E264).